Reading from the N-terminus, the 30-residue chain is GIPCGESCVFIPCITGIAGCSCKSKVCYRN.

The cyclopeptide (Gly-Asn) cross-link spans 1-30 (GIPCGESCVFIPCITGIAGCSCKSKVCYRN). 3 cysteine pairs are disulfide-bonded: Cys4–Cys20, Cys8–Cys22, and Cys13–Cys27.

Post-translationally, this is a cyclic peptide.

Its subcellular location is the secreted. In terms of biological role, probably participates in a plant defense mechanism. The protein is Cyclotide cter-O of Clitoria ternatea (Butterfly pea).